Reading from the N-terminus, the 451-residue chain is MVIRVLFRPVSLIPVNNSSTPQSQGPISRRLALTALGFGVLAPNVLVACAGKVTKLAEKRPPPAPRLTFRPADSAADVVPIAPISVEVGDGWFQRVALTNSAGKVVAGAYSRDRTIYTITEPLGYDTTYTWSGSAVGHDGKAVPVAGKFTTVAPVKTINAGFQLADGQTVGIAAPVIIQFDSPISDKAAVERALTVTTDPPVEGGWAWLPDEAQGARVHWRPREYYPAGTTVDVDAKLYGLPFGDGAYGAQDMSLHFQIGRRQVVKAEVSSHRIQVVTDAGVIMDFPCSYGEADLARNVTRNGIHVVTEKYSDFYMSNPAAGYSHIHERWAVRISNNGEFIHANPMSAGAQGNSNVTNGCINLSTENAEQYYRSAVYGDPVEVTGSSIQLSYADGDIWDWAVDWDTWVSMSALPPPAAKPAATQIPVTAPVTPSDAPTPSGTPTTTNGPGG.

In terms of domain architecture, L,D-TPase catalytic spans 263–384; sequence QVVKAEVSSH…AVYGDPVEVT (122 aa). Substrate-binding positions include Tyr-323 and 337–338; that span reads NG. Residue His-342 is the Proton donor/acceptor of the active site. Catalysis depends on Cys-360, which acts as the Nucleophile. Asn-362 is a binding site for substrate. The tract at residues 417-451 is disordered; it reads AAKPAATQIPVTAPVTPSDAPTPSGTPTTTNGPGG. The segment covering 437–451 has biased composition (low complexity); sequence PTPSGTPTTTNGPGG.

The protein operates within cell wall biogenesis; peptidoglycan biosynthesis. In contrast to other LDT paralogs, LdtMt5 is not inactivated by the beta-lactam carbapenems; beta-lactam carbapenems form covalent adducts with other LDT paralogs but the formation of covalent adducts was not detected for LdtMt5. Functionally, generates 3-&gt;3 cross-links in peptidoglycan, catalyzing the cleavage of the mDap(3)-D-Ala(4) bond of a tetrapeptide donor stem and the formation of a bond between the carbonyl of mDap(3) of the donor stem and the side chain of mDap(3) of the acceptor stem. Is specific for donor substrates containing a stem tetrapeptide since it cannot use pentapeptide stems. In Mycobacterium tuberculosis (strain ATCC 25618 / H37Rv), this protein is L,D-transpeptidase 5 (lprQ).